The following is a 396-amino-acid chain: MNKGENMNLEMWVQNISATFPWYAQLLRDKQADLSRLESLPLITEELLTQHYYHAENSFPGEHHSYLTSGTTSGKRKRIFYSDNDQRIYLQQRMDIIRDFCGEGHTRACADLGTGHAAATAGEIFQAMGCDVELIDFTRPIEQHIEVLNRFKPDIFFTMPMILDSLIATGKLDFQPKRIILLGDVASLNWQNKVADYFHIQPAQVLDLFGSIEIGSIAFYNHAQKRYQFDSYVRPEVVPVQSLYPGAKYGGDGGILLLTSFAREYFPAVRFVTNDLIEGFAQENVGGRTVYTYQRCLGRFAGEFKHGEKINLSDISDALANNLPYHKYDLADHEGGLVIRIAAKSIPTEVIEAIKHDLLARNPDIAQMISSGLVGDIRIQCVDAQEITGNVSKRRY.

The catalysed reaction is (S)-2,3-diaminopropanoate + fumarate + ATP = N(3)-fumaroyl-(S)-2,3-diaminopropanoate + AMP + diphosphate. It functions in the pathway antibiotic biosynthesis. Its function is as follows. Involved in dapdiamide antibiotics biosynthesis. Ligates fumarate and 2,3-diaminopropionate (DAP) to form N-beta-fumaroyl-DAP. Can also form N-succinoyl-DAP from succinate and DAP, with lower efficiency. The chain is Fumarate--(S)-2,3-diaminopropanoate ligase from Enterobacter agglomerans (Erwinia herbicola).